We begin with the raw amino-acid sequence, 155 residues long: Small ribosomal subunit protein uS7 (155 aa).

It belongs to the universal ribosomal protein uS7 family. As to quaternary structure, part of the 30S ribosomal subunit. Contacts proteins S9 and S11.

In terms of biological role, one of the primary rRNA binding proteins, it binds directly to 16S rRNA where it nucleates assembly of the head domain of the 30S subunit. Is located at the subunit interface close to the decoding center, probably blocks exit of the E-site tRNA. This is Small ribosomal subunit protein uS7 from Corynebacterium glutamicum (strain R).